The following is a 777-amino-acid chain: Zinc finger FYVE domain-containing protein 1 (777 aa).

The interval 416–777 is required for localization in the lipid droplets; sequence MAHSSFFPDE…FNCNKKPGDL (362 aa). FYVE-type zinc fingers lie at residues 598–659 and 715–775; these read NSQI…EARN and DHEI…KKPG. 16 residues coordinate Zn(2+): cysteine 604, cysteine 607, cysteine 620, cysteine 623, cysteine 628, cysteine 631, cysteine 651, cysteine 654, cysteine 721, cysteine 724, cysteine 737, cysteine 740, cysteine 745, cysteine 748, cysteine 767, and cysteine 770.

In terms of assembly, interacts with RAB18 (in GTP-bound form). Interacts with BSCL2 in a RAB18-dependent manner. Interacts with ZW10. (Microbial infection) Interacts with SARS coronavirus-2/SARS-CoV-2 non-structural protein 6 (nsp6); the interaction is independent of PtdIns3P-binding and leads to endoplasmic reticulum (ER) and double membrane vesicles (DMVs) binding to lipid droplets. Highly expressed in heart. Also detected in the testis. In terms of tissue distribution, expressed in all tissues examined, including, brain, placenta, lung, liver, skeletal muscle, pancreas and kidney. Highly expressed in heart.

Its subcellular location is the golgi apparatus. It is found in the golgi stack. It localises to the endoplasmic reticulum. The protein localises to the lipid droplet. The protein resides in the preautophagosomal structure. Its subcellular location is the mitochondrion. In terms of biological role, plays a role in the formation of lipid droplets (LDs) which are storage organelles at the center of lipid and energy homeostasis. Regulates the morphology, size and distribution of LDs. Mediates the formation of endoplasmic reticulum-lipid droplets (ER-LD) contacts by forming a complex with RAB18 and ZW10. Binds to phosphatidylinositol 3-phosphate (PtdIns3P) through FYVE-type zinc finger. Its function is as follows. (Microbial infection) Upon SARS coronavirus-2/SARS-CoV-2 infection, mediates through binding with non-structural protein 6 (nsp6) the replication organelle-lipid droplet association required to sustain viral replication. The chain is Zinc finger FYVE domain-containing protein 1 (ZFYVE1) from Homo sapiens (Human).